We begin with the raw amino-acid sequence, 206 residues long: Adenine phosphoribosyltransferase (206 aa).

It belongs to the purine/pyrimidine phosphoribosyltransferase family. In terms of assembly, homodimer.

It localises to the cytoplasm. The enzyme catalyses AMP + diphosphate = 5-phospho-alpha-D-ribose 1-diphosphate + adenine. It participates in purine metabolism; AMP biosynthesis via salvage pathway; AMP from adenine: step 1/1. Functionally, catalyzes a salvage reaction resulting in the formation of AMP, that is energically less costly than de novo synthesis. The protein is Adenine phosphoribosyltransferase of Rhodopirellula baltica (strain DSM 10527 / NCIMB 13988 / SH1).